The primary structure comprises 70 residues: Small ribosomal subunit protein bS21A (70 aa).

It belongs to the bacterial ribosomal protein bS21 family.

This is Small ribosomal subunit protein bS21A from Burkholderia orbicola (strain AU 1054).